A 237-amino-acid polypeptide reads, in one-letter code: Ribonuclease PH (237 aa).

Phosphate contacts are provided by residues R86 and 124–126; that span reads GTR.

The protein belongs to the RNase PH family. In terms of assembly, homohexameric ring arranged as a trimer of dimers.

It catalyses the reaction tRNA(n+1) + phosphate = tRNA(n) + a ribonucleoside 5'-diphosphate. In terms of biological role, phosphorolytic 3'-5' exoribonuclease that plays an important role in tRNA 3'-end maturation. Removes nucleotide residues following the 3'-CCA terminus of tRNAs; can also add nucleotides to the ends of RNA molecules by using nucleoside diphosphates as substrates, but this may not be physiologically important. Probably plays a role in initiation of 16S rRNA degradation (leading to ribosome degradation) during starvation. This Shewanella sp. (strain ANA-3) protein is Ribonuclease PH.